Here is a 789-residue protein sequence, read N- to C-terminus: Cadherin-6 (789 aa).

The first 18 residues, 1-18 (MRTYRYFLLLFWVGQPYP), serve as a signal peptide directing secretion. Residues 19–53 (TFSNPLSKRTSGFPAKRRALELSANSRNELSRSKR) constitute a propeptide that is removed on maturation. Cadherin domains are found at residues 54–159 (SWMW…EPIF), 160–268 (TKDV…PPRF), 269–383 (PQST…PPVF), 384–486 (SKPA…DNAP), and 487–608 (EFAE…LIHP). Residues 54–615 (SWMWNQFFLL…IHPTGLSTGA (562 aa)) are Extracellular-facing. N-linked (GlcNAc...) asparagine glycosylation is present at Asn255. The interval 259 to 288 (TDVNDNPPRFPQSTYQFKTPESSPPGTPIG) is disordered. Polar residues predominate over residues 269-279 (PQSTYQFKTPE). N-linked (GlcNAc...) asparagine glycans are attached at residues Asn399, Asn437, Asn455, and Asn536. A helical membrane pass occupies residues 616-636 (LVAILLCIVILLVTVVLFAAL). Residues 637 to 789 (RRQRKKEPLI…YGGMDSDKDS (153 aa)) are Cytoplasmic-facing. 2 positions are modified to phosphoserine: Ser785 and Ser789.

In terms of tissue distribution, highly expressed in kidney and brain.

The protein resides in the cell membrane. In terms of biological role, cadherins are calcium-dependent cell adhesion proteins. They preferentially interact with themselves in a homophilic manner in connecting cells; cadherins may thus contribute to the sorting of heterogeneous cell types. The chain is Cadherin-6 (Cdh6) from Rattus norvegicus (Rat).